The sequence spans 310 residues: Porphobilinogen deaminase (310 aa).

At C241 the chain carries S-(dipyrrolylmethanemethyl)cysteine.

It belongs to the HMBS family. Monomer. The cofactor is dipyrromethane.

The enzyme catalyses 4 porphobilinogen + H2O = hydroxymethylbilane + 4 NH4(+). It participates in porphyrin-containing compound metabolism; protoporphyrin-IX biosynthesis; coproporphyrinogen-III from 5-aminolevulinate: step 2/4. In terms of biological role, tetrapolymerization of the monopyrrole PBG into the hydroxymethylbilane pre-uroporphyrinogen in several discrete steps. The chain is Porphobilinogen deaminase from Lysinibacillus sphaericus (strain C3-41).